Reading from the N-terminus, the 549-residue chain is Peptide transport periplasmic protein SapA (549 aa).

Positions 1 to 21 (MRLVLSSLIVIAGLLSSQATA) are cleaved as a signal peptide.

It belongs to the bacterial solute-binding protein 5 family.

Its subcellular location is the periplasm. Involved in a peptide intake transport system that plays a role in the resistance to antimicrobial peptides. This chain is Peptide transport periplasmic protein SapA, found in Salmonella typhimurium (strain LT2 / SGSC1412 / ATCC 700720).